A 256-amino-acid chain; its full sequence is C-8 sterol isomerase (256 aa).

Residues Met1 to Arg31 form a disordered region. Over residues Ser7–Cys30 the composition is skewed to low complexity. The helical transmembrane segment at Ile40 to Val60 threads the bilayer.

The protein belongs to the ERG2 family.

The protein localises to the endoplasmic reticulum membrane. It functions in the pathway steroid metabolism; ergosterol biosynthesis; ergosterol from zymosterol: step 2/5. Its function is as follows. Catalyzes the reaction which results in unsaturation at C-7 in the B ring of sterols. In Neurospora crassa (strain ATCC 24698 / 74-OR23-1A / CBS 708.71 / DSM 1257 / FGSC 987), this protein is C-8 sterol isomerase (erg-1).